Reading from the N-terminus, the 348-residue chain is Dihydroorotase (348 aa).

2 residues coordinate Zn(2+): histidine 17 and histidine 19. Substrate contacts are provided by residues 19–21 (HLR) and asparagine 45. Positions 103, 140, and 178 each coordinate Zn(2+). Position 103 is an N6-carboxylysine (lysine 103). Histidine 140 provides a ligand contact to substrate. Leucine 223 contributes to the substrate binding site. Residue aspartate 251 participates in Zn(2+) binding. Aspartate 251 is an active-site residue. The substrate site is built by histidine 255 and alanine 267.

It belongs to the metallo-dependent hydrolases superfamily. DHOase family. Class II DHOase subfamily. In terms of assembly, homodimer. It depends on Zn(2+) as a cofactor.

It carries out the reaction (S)-dihydroorotate + H2O = N-carbamoyl-L-aspartate + H(+). Its pathway is pyrimidine metabolism; UMP biosynthesis via de novo pathway; (S)-dihydroorotate from bicarbonate: step 3/3. Catalyzes the reversible cyclization of carbamoyl aspartate to dihydroorotate. The sequence is that of Dihydroorotase from Yersinia enterocolitica serotype O:8 / biotype 1B (strain NCTC 13174 / 8081).